A 406-amino-acid polypeptide reads, in one-letter code: Succinylornithine transaminase (406 aa).

Lysine 252 is subject to N6-(pyridoxal phosphate)lysine.

Belongs to the class-III pyridoxal-phosphate-dependent aminotransferase family. AstC subfamily. Pyridoxal 5'-phosphate serves as cofactor.

The catalysed reaction is N(2)-succinyl-L-ornithine + 2-oxoglutarate = N-succinyl-L-glutamate 5-semialdehyde + L-glutamate. The protein operates within amino-acid degradation; L-arginine degradation via AST pathway; L-glutamate and succinate from L-arginine: step 3/5. Catalyzes the transamination of N(2)-succinylornithine and alpha-ketoglutarate into N(2)-succinylglutamate semialdehyde and glutamate. Can also act as an acetylornithine aminotransferase. The polypeptide is Succinylornithine transaminase (Escherichia coli O17:K52:H18 (strain UMN026 / ExPEC)).